Consider the following 197-residue polypeptide: OV-16 antigen (197 aa).

Residues 1–16 form the signal peptide; it reads MHCLQVVIAIVLYSFG. N-linked (GlcNAc...) asparagine glycans are attached at residues N56, N61, N119, and N124.

This sequence belongs to the phosphatidylethanolamine-binding protein family. As to expression, hypodermis, cuticle and uterus.

This chain is OV-16 antigen (OV16), found in Onchocerca volvulus.